We begin with the raw amino-acid sequence, 435 residues long: Glutamyl-tRNA reductase (435 aa).

Residues T49–R52, S109, E114–Q116, and Q120 each bind substrate. C50 (nucleophile) is an active-site residue. G189 to S194 lines the NADP(+) pocket.

Belongs to the glutamyl-tRNA reductase family. As to quaternary structure, homodimer.

It carries out the reaction (S)-4-amino-5-oxopentanoate + tRNA(Glu) + NADP(+) = L-glutamyl-tRNA(Glu) + NADPH + H(+). It functions in the pathway porphyrin-containing compound metabolism; protoporphyrin-IX biosynthesis; 5-aminolevulinate from L-glutamyl-tRNA(Glu): step 1/2. Functionally, catalyzes the NADPH-dependent reduction of glutamyl-tRNA(Glu) to glutamate 1-semialdehyde (GSA). The protein is Glutamyl-tRNA reductase of Listeria monocytogenes serovar 1/2a (strain ATCC BAA-679 / EGD-e).